A 644-amino-acid chain; its full sequence is uncharacterized protein (644 aa).

Residues 16 to 38 (LLSYLGVVGVGIAGLCIYRSVWG) traverse the membrane as a helical segment. Basic and acidic residues predominate over residues 586–603 (VRQLQKEAGEGEAEEHPR). Residues 586–613 (VRQLQKEAGEGEAEEHPRARPAAGKAQR) are disordered.

It localises to the membrane. This is an uncharacterized protein from Treponema pallidum (strain Nichols).